Here is a 669-residue protein sequence, read N- to C-terminus: Diacylglycerol lipase-beta (669 aa).

Residues 1–17 (MPGMVLFGRRWSLASDD) lie on the Cytoplasmic side of the membrane. A helical transmembrane segment spans residues 18 to 38 (LVFPGSFELFLRVLWWIVSLT). Residues 39–58 (LYLTHRRRLDCPGGVLLSTY) lie on the Extracellular side of the membrane. A helical membrane pass occupies residues 59-79 (LIVLLVLLAVIICTVLAIVCV). Residues 80–102 (SMRGTICNPGPRKSMSKLLYIRL) are Cytoplasmic-facing. A helical transmembrane segment spans residues 103-123 (ALFLPEMVWASLGAAWVAKGI). The Extracellular portion of the chain corresponds to 124–128 (QCDRT). The chain crosses the membrane as a helical span at residues 129-149 (VVIGIIATVIVSWIVIAATMV). The Cytoplasmic portion of the chain corresponds to 150 to 669 (TIIFVFDPLG…CPGQGGSSVP (520 aa)). Active-site charge relay system residues include serine 443 and aspartate 495. Residues serine 570, serine 578, and serine 582 each carry the phosphoserine modification.

It belongs to the AB hydrolase superfamily. Lipase family. It depends on Ca(2+) as a cofactor. In terms of tissue distribution, expressed in liver and immune cells such as macrophages and microglias. In embryonic brains present in axonal tracts, while in adults localizes to dendritic fields, correlating with the developmental change in requirement for 2-AG synthesis from the pre- to the postsynaptic compartment (at protein level).

The protein resides in the cell membrane. It catalyses the reaction a 1,2-diacyl-sn-glycerol + H2O = a 2-acylglycerol + a fatty acid + H(+). The catalysed reaction is 1-octadecanoyl-2-(5Z,8Z,11Z,14Z-eicosatetraenoyl)-sn-glycerol + H2O = 2-(5Z,8Z,11Z,14Z-eicosatetraenoyl)-glycerol + octadecanoate + H(+). The enzyme catalyses 1,2-di-(9Z-octadecenoyl)-sn-glycerol + H2O = 2-(9Z-octadecenoyl)-glycerol + (9Z)-octadecenoate + H(+). It carries out the reaction 1-(9Z-octadecenoyl)-2-(5Z,8Z,11Z,14Z-eicosatetraenoyl)-sn-glycerol + H2O = 2-(5Z,8Z,11Z,14Z-eicosatetraenoyl)-glycerol + (9Z)-octadecenoate + H(+). It catalyses the reaction 1-(9Z-octadecenoyl)-2-octadecanoyl-sn-glycerol + H2O = 2-octadecanoylglycerol + (9Z)-octadecenoate + H(+). The catalysed reaction is 1-(9Z-octadecenoyl)-2-(9Z,12Z-octadecadienoyl)-sn-glycerol + H2O = 2-(9Z,12Z-octadecadienoyl)-glycerol + (9Z)-octadecenoate + H(+). The enzyme catalyses 1-(9Z-octadecenoyl)-2-O-(5Z,8Z,11Z,14Z-eicosatetraenyl)-sn-glycerol + H2O = 2-O-(5Z,8Z,11Z,14Z)-eicosatetraenylglycerol + (9Z)-octadecenoate + H(+). It carries out the reaction a triacylglycerol + H2O = a diacylglycerol + a fatty acid + H(+). It catalyses the reaction 1,2,3-tri-(5Z,8Z,11Z,14Z-eicosatetraenoyl)-glycerol + H2O = 1,2-di-(5Z,8Z,11Z,14Z-eicosatetraenoyl)-glycerol + (5Z,8Z,11Z,14Z)-eicosatetraenoate + H(+). The catalysed reaction is 1,2,3-(4Z,7Z,10Z,13Z,16Z,19Z-docosahexaenoyl)-glycerol + H2O = 1,2-di-(4Z,7Z,10Z,13Z,16Z,19Z-docosahexaenoyl)-glycerol + (4Z,7Z,10Z,13Z,16Z,19Z)-docosahexaenoate + H(+). With respect to regulation, inhibited by the 1,2,3-triazole urea covalent inhibitors KT109 and KT172. Inhibited by p-hydroxy-mercuri-benzoate and HgCl(2), but not by PMSF. Also inhibited by RHC80267, a drug that blocks 2-AG formation. Functionally, lipase that catalyzes the hydrolysis of arachidonic acid (AA)-esterified diacylglycerols (DAGs) to produce the principal endocannabinoid, 2-arachidonoylglycerol (2-AG) which can be further cleaved by downstream enzymes to release arachidonic acid (AA) for cyclooxygenase (COX)-mediated eicosanoid production. Preferentially hydrolyzes DAGs at the sn-1 position in a calcium-dependent manner and has negligible activity against other lipids including monoacylglycerols and phospholipids. Plays a key role in the regulation of 2-AG and AA pools utilized by COX1/2 to generate lipid mediators of macrophage and microglia inflammatory responses. Also functions as a polyunsaturated fatty acids-specific triacylglycerol lipase in macrophages. Plays an important role to support the metabolic and signaling demands of macrophages. The chain is Diacylglycerol lipase-beta (Daglb) from Mus musculus (Mouse).